The chain runs to 521 residues: Amidase (521 aa).

Active-site charge relay system residues include lysine 96 and serine 171. Positions 155–174 (SGPVRNPWDRQREAGGSSGG) are disordered. Serine 195 functions as the Acyl-ester intermediate in the catalytic mechanism.

Belongs to the amidase family. In terms of assembly, homodimer.

The catalysed reaction is a monocarboxylic acid amide + H2O = a monocarboxylate + NH4(+). Hydrolyzes propionamides efficiently, and also at a lower efficiency, acetamide, acrylamide and indoleacetamide. This enzyme seems to be stereospecific and can lead to the production of a single enantiomer. The chain is Amidase (amdA) from Rhodococcus erythropolis (Arthrobacter picolinophilus).